The following is a 310-amino-acid chain: Ribonuclease Z (310 aa).

The Zn(2+) site is built by His64, His66, Asp68, His69, His142, Asp213, and His271. Catalysis depends on Asp68, which acts as the Proton acceptor.

Belongs to the RNase Z family. Homodimer. Requires Zn(2+) as cofactor.

It catalyses the reaction Endonucleolytic cleavage of RNA, removing extra 3' nucleotides from tRNA precursor, generating 3' termini of tRNAs. A 3'-hydroxy group is left at the tRNA terminus and a 5'-phosphoryl group is left at the trailer molecule.. Its function is as follows. Zinc phosphodiesterase, which displays some tRNA 3'-processing endonuclease activity. Probably involved in tRNA maturation, by removing a 3'-trailer from precursor tRNA. This is Ribonuclease Z from Treponema pallidum (strain Nichols).